A 362-amino-acid polypeptide reads, in one-letter code: uncharacterized protein (362 aa).

Residue Ala-2 is modified to N-acetylalanine.

It belongs to the Gfo/Idh/MocA family. Homodimer.

This is an uncharacterized protein from Arabidopsis thaliana (Mouse-ear cress).